We begin with the raw amino-acid sequence, 125 residues long: Glutaredoxin-C1 (125 aa).

The 101-residue stretch at 19–119 (VNKAKEIVSA…PLLTEAGAIA (101 aa)) folds into the Glutaredoxin domain. Residues C39 and C42 are joined by a disulfide bond.

This sequence belongs to the glutaredoxin family. CPYC subfamily.

It is found in the cytoplasm. Functionally, has a glutathione-disulfide oxidoreductase activity in the presence of NADPH and glutathione reductase. Reduces low molecular weight disulfides and proteins. This is Glutaredoxin-C1 (GRXC1) from Arabidopsis thaliana (Mouse-ear cress).